Here is a 594-residue protein sequence, read N- to C-terminus: CDPK-related kinase 4 (594 aa).

Residues 1-131 (MGHCYSRNIS…DSGGGERLDK (131 aa)) form a disordered region. Gly2 is lipidated: N-myristoyl glycine. Positions 37–58 (IPQSPVASGTPEVNSYNISPFQ) are enriched in polar residues. Positions 116–131 (VVDHGGDSGGGERLDK) are enriched in basic and acidic residues. The Protein kinase domain maps to 143–405 (YELGKEVGRG…AAQALAHPWL (263 aa)). Residues 149 to 157 (VGRGHFGHT) and Lys175 contribute to the ATP site. Asp271 acts as the Proton acceptor in catalysis. Ser311 carries the phosphoserine modification. Residues 409-439 (NPGLLLDFSVYKLVKSYIRASPFRRSALKAL) form an autoinhibitory domain region. Positions 428–448 (ASPFRRSALKALSKAIPDEEL) are calmodulin binding (CaMBD). EF-hand domains lie at 446 to 481 (EELVFLKAQFMLLDPKDGGLSLNCFTMALTRYATDA), 482 to 517 (MMESRLPDILNTMQPLAQKKLDFEEFCAAAVSVYQL), 518 to 557 (EALEEWEQIATSAFEHFEHEGNRIISVQELAGEMSVGPSA), and 558 to 587 (YPLLKDWIRSSDGKLSFLGYAKFLHGVTVR). Ca(2+) is bound by residues Asp462, Lys501, Glu506, Asn539, Glu546, Ser567, Asp569, and Lys571. Ser573 is modified (phosphoserine).

Belongs to the protein kinase superfamily. Ser/Thr protein kinase family. CDPK subfamily. Binds calmodulin (CaM) in a calcium-dependent manner. Post-translationally, autophosphorylated.

Its subcellular location is the cell membrane. The enzyme catalyses L-seryl-[protein] + ATP = O-phospho-L-seryl-[protein] + ADP + H(+). It carries out the reaction L-threonyl-[protein] + ATP = O-phospho-L-threonyl-[protein] + ADP + H(+). Activated by calcium and calmodulin. Autophosphorylation may play an important role in the regulation of the kinase activity. In terms of biological role, may play a role in signal transduction pathways that involve calcium as a second messenger. This chain is CDPK-related kinase 4 (CRK4), found in Arabidopsis thaliana (Mouse-ear cress).